Reading from the N-terminus, the 1035-residue chain is MPVEFATNPFGEAKNATSLPKYGTPVTAISSVLFNNVDSIFAYKSFSQPDLLHQDLKKWSEKRGNESRGKPFFQELDIRSGAGLAPLGFSHGLKNTTAIVAPGFSLPYFINSLKTVSHDGKFLLNVGALNYDNATGSVTNDYVTALDAASKLKYGVVTPISANEVQSVALLALAIATFSNNSGAINLFDGLNYSKTVLPLVESVPEASILAKLSKVIAPDAAFDDVLDKFNELTGLRLHNFQYFGAQDAETVFITYGSLESELFNSAISGNNSKIGLINVRVPLPFNVAKFVTHVPSTTKQIVVIGQTLDGSSPSFLRSQVSAALFYHGRTSISVSEYIYQPDFIWSPKAVKSIVSSFIPEFTYNADSSFGEGFIYWASDKSINIDVASKLVKALSLEDGKFVSLRTKFDNLANAGTFQAQFVTSKEQIPVSNIDSTKLSVVEDVSLLKHLDVAATVAEQGSIALVSQKAVKDLDLNSVESYVKNLGIPESFLISIAKKNIKLFIIDGETTNDESKLSLFIQAVFWKLAFGLDVAECTNRIWKSIDSGADISAASISEFLTGAFKNFLSEVPLALYTKFSEINIEKKEDEEEPAALPIFVNETSFLPNNSTIEEIPLPETSEISDIAKKLSFKEAYEVENKLRPDLPVKNFVVKVKENRRVTPADYDRYIFHIEFDISGTGMTYDIGEALGIHARNNESLVKEFLTFYGLNESDVVLVPNKDNHHLLETRTVLQAFVENLDIFGKPPKRFYESLIPYASNEEEKKKLEDLVTPAGAVDLKRFQDVEYYTYADIFELFPSVRPSLEELVTIIEPLKRREYSIASSQKVHPNEVHLLIVVVDWVDNKGRKRYGQASKYISDLAVGSELVVSVKPSVMKLPPSPKQPVIMSGLGTGLAPFKAIVEEKLWQKQQGYEIGEVFLYLGSRHKREEYLYGELWEAYKDAGIITHIGAAFSRDQPQKIYIQDRIKENLDELKTAMIDNKGSFYLCGPTWPVPDITQALQDILAKDAEERGIKVDLDAAIEELKEASRYILEVY.

Positions 648–879 (VKNFVVKVKE…VKPSVMKLPP (232 aa)) constitute an FAD-binding FR-type domain. Residues 684–695 (YDIGEALGIHAR) and 814–824 (LKRREYSIASS) each bind FAD.

FAD is required as a cofactor. Requires FMN as cofactor.

It carries out the reaction hydrogen sulfide + 3 NADP(+) + 3 H2O = sulfite + 3 NADPH + 4 H(+). Its pathway is sulfur metabolism; hydrogen sulfide biosynthesis; hydrogen sulfide from sulfite (NADPH route): step 1/1. Its function is as follows. This enzyme catalyzes the 6-electron reduction of sulfite to sulfide. This is one of several activities required for the biosynthesis of L-cysteine from sulfate. In Saccharomyces cerevisiae (strain ATCC 204508 / S288c) (Baker's yeast), this protein is Sulfite reductase [NADPH] flavoprotein component (MET10).